The following is a 443-amino-acid chain: UDP-N-acetylmuramate--L-alanine ligase (443 aa).

110 to 116 (GAHGKTS) contributes to the ATP binding site.

The protein belongs to the MurCDEF family.

The protein resides in the cytoplasm. It carries out the reaction UDP-N-acetyl-alpha-D-muramate + L-alanine + ATP = UDP-N-acetyl-alpha-D-muramoyl-L-alanine + ADP + phosphate + H(+). Its pathway is cell wall biogenesis; peptidoglycan biosynthesis. Its function is as follows. Cell wall formation. This Streptococcus agalactiae serotype Ia (strain ATCC 27591 / A909 / CDC SS700) protein is UDP-N-acetylmuramate--L-alanine ligase.